The chain runs to 275 residues: 6-deoxy-6-sulfo-D-fructose transketolase subunit SqwG (275 aa).

The protein belongs to the transketolase family. In terms of assembly, forms a complex with SqwH. Requires thiamine diphosphate as cofactor.

The enzyme catalyses 6-deoxy-6-sulfo-D-fructose + D-glyceraldehyde 3-phosphate = 4-deoxy-4-sulfo-D-erythrose + D-xylulose 5-phosphate. It catalyses the reaction 4-deoxy-4-sulfo-D-erythrulose + D-glyceraldehyde 3-phosphate = sulfoacetaldehyde + D-xylulose 5-phosphate. In terms of biological role, part of the sulfo-TK pathway, a D-sulfoquinovose degradation pathway that produces 2-hydroxyethane-1-sulfonate (isethionate). Catalyzes two steps of the pathway: the formation of 4-deoxy-4-sulfoerythrose (SE) and xylulose 5-phosphate from 6-deoxy-6-sulfo-D-fructose (SF) and glyceraldehyde 3-phosphate, and the formation of sulfoacetaldehyde (SA) and xylulose 5-phosphate from 4-deoxy-4-sulfo-D-erythrulose (SEu) and glyceraldehyde 3-phosphate. This Clostridium sp. (strain MSTE9) protein is 6-deoxy-6-sulfo-D-fructose transketolase subunit SqwG.